The following is a 175-amino-acid chain: EKC/KEOPS complex subunit TPRKB (175 aa).

This sequence belongs to the CGI121/TPRKB family. Component of the EKC/KEOPS complex.

It localises to the cytoplasm. It is found in the cytosol. Its subcellular location is the nucleus. Functionally, component of the EKC/KEOPS complex that is required for the formation of a threonylcarbamoyl group on adenosine at position 37 (t(6)A37) in tRNAs that read codons beginning with adenine. The complex is probably involved in the transfer of the threonylcarbamoyl moiety of threonylcarbamoyl-AMP (TC-AMP) to the N6 group of A37. Tprkb acts as an allosteric effector that regulates the t(6)A activity of the complex. The sequence is that of EKC/KEOPS complex subunit TPRKB from Danio rerio (Zebrafish).